Here is a 447-residue protein sequence, read N- to C-terminus: MSLWLGAPVPDIPPDSAVELWKPGAQDASSQAQGGSSCILREEARMPHSAGGTAGVGLEAAEPTALLTRAEPPSEPTEIRPQKRKKGPAPKMLGNELCSVCGDKASGFHYNVLSCEGCKGFFRRSVIKGAHYICHSGGHCPMDTYMRRKCQECRLRKCRQAGMREECVLSEEQIRLKKLKRQEEEQAHATSLPPRASSPPQILPQLSPEQLGMIEKLVAAQQQCNRRSFSDRLRVTPWPMAPDPHSREARQQRFAHFTELAIVSVQEIVDFAKQLPGFLQLSREDQIALLKTSAIEVMLLETSRRYNPGSESITFLKDFSYNREDFAKAGLQVEFINPIFEFSRAMNELQLNDAEFALLIAISIFSADRPNVQDQLQVERLQHTYVEALHAYVSIHHPHDRLMFPRMLMKLVSLRTLSSVHSEQVFALRLQDKKLPPLLSEIWDVHE.

2 disordered regions span residues 1–37 and 65–88; these read MSLW…GGSS and ALLT…KKGP. A transactivation AF-1; required for ligand-independent transactivation function region spans residues 1–96; sequence MSLWLGAPVP…GPAPKMLGNE (96 aa). A compositionally biased stretch (low complexity) spans 24–37; it reads GAQDASSQAQGGSS. The nuclear receptor DNA-binding region spans 95 to 170; that stretch reads NELCSVCGDK…AGMREECVLS (76 aa). 2 NR C4-type zinc fingers span residues 98–118 and 134–158; these read CSVC…CEGC and CHSG…LRKC. The tract at residues 180 to 202 is disordered; it reads KRQEEEQAHATSLPPRASSPPQI. Positions 205-447 are transactivation AF-2; required for ligand-dependent transactivation function; mediates interaction with CCAR2; sequence QLSPEQLGMI…LLSEIWDVHE (243 aa). In terms of domain architecture, NR LBD spans 209–447; sequence EQLGMIEKLV…LLSEIWDVHE (239 aa).

The protein belongs to the nuclear hormone receptor family. NR1 subfamily. As to quaternary structure, heterodimer of NR1H3 and RXR (retinoic acid receptor). Interacts with CCAR2 (via N-terminus) in a ligand-independent manner. Interacts with SIRT1 and this interaction is inhibited by CCAR2. Interacts with GPS2. In terms of processing, ubiquitinated by UBR5, leading to its degradation: UBR5 specifically recognizes and binds ligand-bound NR1H3 when it is not associated with coactivators (NCOAs). In presence of NCOAs, the UBR5-degron is not accessible, preventing its ubiquitination and degradation. Visceral organs specific expression. Strong expression was found in liver, kidney and intestine followed by spleen and to a lesser extent the adrenals.

It is found in the nucleus. Its subcellular location is the cytoplasm. Its function is as follows. Nuclear receptor that exhibits a ligand-dependent transcriptional activation activity. Interaction with retinoic acid receptor (RXR) shifts RXR from its role as a silent DNA-binding partner to an active ligand-binding subunit in mediating retinoid responses through target genes defined by LXRES. LXRES are DR4-type response elements characterized by direct repeats of two similar hexanuclotide half-sites spaced by four nucleotides. Plays an important role in the regulation of cholesterol homeostasis, regulating cholesterol uptake through MYLIP-dependent ubiquitination of LDLR, VLDLR and LRP8. Interplays functionally with RORA for the regulation of genes involved in liver metabolism. Induces LPCAT3-dependent phospholipid remodeling in endoplasmic reticulum (ER) membranes of hepatocytes, driving SREBF1 processing and lipogenesis. Via LPCAT3, triggers the incorporation of arachidonate into phosphatidylcholines of ER membranes, increasing membrane dynamics and enabling triacylglycerols transfer to nascent very low-density lipoprotein (VLDL) particles. Via LPCAT3 also counteracts lipid-induced ER stress response and inflammation, likely by modulating SRC kinase membrane compartmentalization and limiting the synthesis of lipid inflammatory mediators. In Homo sapiens (Human), this protein is Oxysterols receptor LXR-alpha (NR1H3).